A 300-amino-acid polypeptide reads, in one-letter code: 2-dehydropantoate 2-reductase (300 aa).

NADP(+) is bound by residues 7 to 12, K74, N99, and A123; that span reads GAGAIG. K179 acts as the Proton donor in catalysis. Substrate-binding positions include K179, N183, N187, N197, and 246–249; that span reads NYNS. E261 lines the NADP(+) pocket.

Belongs to the ketopantoate reductase family.

It localises to the cytoplasm. The catalysed reaction is (R)-pantoate + NAD(+) = 2-dehydropantoate + NADH + H(+). It catalyses the reaction (R)-pantoate + NADP(+) = 2-dehydropantoate + NADPH + H(+). The protein operates within cofactor biosynthesis; coenzyme A biosynthesis. Functionally, catalyzes the NAD(P)H-dependent reduction of ketopantoate into pantoic acid. The polypeptide is 2-dehydropantoate 2-reductase (apbA) (Pyrococcus abyssi (strain GE5 / Orsay)).